The sequence spans 284 residues: Bifunctional protein FolD (284 aa).

Residues 166-168 (GAS) and Ile-232 contribute to the NADP(+) site.

This sequence belongs to the tetrahydrofolate dehydrogenase/cyclohydrolase family. Homodimer.

The enzyme catalyses (6R)-5,10-methylene-5,6,7,8-tetrahydrofolate + NADP(+) = (6R)-5,10-methenyltetrahydrofolate + NADPH. It catalyses the reaction (6R)-5,10-methenyltetrahydrofolate + H2O = (6R)-10-formyltetrahydrofolate + H(+). It functions in the pathway one-carbon metabolism; tetrahydrofolate interconversion. In terms of biological role, catalyzes the oxidation of 5,10-methylenetetrahydrofolate to 5,10-methenyltetrahydrofolate and then the hydrolysis of 5,10-methenyltetrahydrofolate to 10-formyltetrahydrofolate. The protein is Bifunctional protein FolD of Shewanella sp. (strain ANA-3).